The primary structure comprises 124 residues: MLGIDIIKNIRIAKALERFGYHFLNRVYTEYEINLCKMNVECLSGRFAAKEASIKAFSFLSIRRFSFRDFEVVKSKNGIPELRIKDAYINDFLKAQKLKPFISISHEKEFSVAVCYITKEERIC.

Positions 5 and 51 each coordinate Mg(2+).

This sequence belongs to the P-Pant transferase superfamily. AcpS family. Mg(2+) serves as cofactor.

It localises to the cytoplasm. It carries out the reaction apo-[ACP] + CoA = holo-[ACP] + adenosine 3',5'-bisphosphate + H(+). Transfers the 4'-phosphopantetheine moiety from coenzyme A to a Ser of acyl-carrier-protein. This Hydrogenobaculum sp. (strain Y04AAS1) protein is Holo-[acyl-carrier-protein] synthase.